A 572-amino-acid polypeptide reads, in one-letter code: Terminal nucleotidyltransferase 4B (572 aa).

A disordered region spans residues 1 to 105 (MYRSGERLLG…ADGGGVVYSG (105 aa)). Residues 25–34 (ETTNNNNNHH) are compositionally biased toward polar residues. Residues 36–76 (PGAWARRAGSSASSPPSASSSPHPSAAVPAADPADSASGSS) are compositionally biased toward low complexity. Residues 89–102 (RAAGGGRADGGGVV) are compositionally biased toward gly residues. V151 participates in a covalent cross-link: Glycyl lysine isopeptide (Lys-Gly) (interchain with G-Cter in SUMO2). Positions 177 and 179 each coordinate Mg(2+). 6 residues coordinate ATP: G240, K265, S283, Y284, N368, and R372. A PAP-associated domain is found at 308–368 (NYGVLLIEFF…YIEDPLQPGN (61 aa)). The tract at residues 435–572 (KNRPEPSCNG…RDAPLSDLCR (138 aa)) is disordered. Low complexity predominate over residues 446–464 (VSSSSATQSSSSDVDSDAT). Residue K470 forms a Glycyl lysine isopeptide (Lys-Gly) (interchain with G-Cter in SUMO2) linkage. Over residues 477–494 (STGNRVGSQDVSLESSQA) the composition is skewed to polar residues. S484 bears the Phosphoserine mark. Glycyl lysine isopeptide (Lys-Gly) (interchain with G-Cter in SUMO2) cross-links involve residues K497, K512, and K526. The span at 499–514 (QSTQTTNTSNSTNKSQ) shows a compositional bias: low complexity. Residues 522-553 (RSSSKGFQGTTQTSHGSLMTNKQHQGKSNNQY) show a composition bias toward polar residues. The Basic, involved in binding of the RNA primer signature appears at 557–563 (KKRKHKR).

It belongs to the DNA polymerase type-B-like family. In terms of assembly, component of a nucleolar TRAMP-like complex, an ATP-dependent exosome regulatory complex consisting of a helicase (MTREX), an oligadenylate polymerase (TENT4B or TENT4A), and a substrate specific RNA-binding factor (ZCCHC7 or ZCCHC8). Several TRAMP-like complexes exist with specific compositions and are associated with nuclear, or nucleolar RNA exosomes. Interacts with CPEB1; the interaction is required for TENT4B-mediated translational control. The cofactor is Mg(2+). Mn(2+) serves as cofactor.

Its subcellular location is the nucleus. It is found in the nucleolus. It localises to the cytoplasm. The catalysed reaction is RNA(n) + ATP = RNA(n)-3'-adenine ribonucleotide + diphosphate. Its function is as follows. Terminal nucleotidyltransferase that catalyzes preferentially the transfer of ATP and GTP on RNA 3' poly(A) tail creating a heterogeneous 3' poly(A) tail leading to mRNAs stabilization by protecting mRNAs from active deadenylation. Also functions as a catalytic subunit of a TRAMP-like complex which has a poly(A) RNA polymerase activity and is involved in a post-transcriptional quality control mechanism. Polyadenylation with short oligo(A) tails is required for the degradative activity of the exosome on several of its nuclear RNA substrates. Doesn't need a cofactor for polyadenylation activity (in vitro). Required for cytoplasmic polyadenylation of mRNAs involved in carbohydrate metabolism, including the glucose transporter SLC2A1/GLUT1. Plays a role in replication-dependent histone mRNA degradation, probably through terminal uridylation of mature histone mRNAs. May play a role in sister chromatid cohesion. Mediates 3' adenylation of the microRNA MIR21 followed by its 3'-to-5' trimming by the exoribonuclease PARN leading to degradation. Mediates 3' adenylation of H/ACA box snoRNAs (small nucleolar RNAs) followed by its 3'-to-5' trimming by the exoribonuclease PARN which enhances snoRNA stability and maturation. This Homo sapiens (Human) protein is Terminal nucleotidyltransferase 4B.